A 243-amino-acid polypeptide reads, in one-letter code: Phosphoribosylaminoimidazole-succinocarboxamide synthase (243 aa).

The protein belongs to the SAICAR synthetase family.

The enzyme catalyses 5-amino-1-(5-phospho-D-ribosyl)imidazole-4-carboxylate + L-aspartate + ATP = (2S)-2-[5-amino-1-(5-phospho-beta-D-ribosyl)imidazole-4-carboxamido]succinate + ADP + phosphate + 2 H(+). Its pathway is purine metabolism; IMP biosynthesis via de novo pathway; 5-amino-1-(5-phospho-D-ribosyl)imidazole-4-carboxamide from 5-amino-1-(5-phospho-D-ribosyl)imidazole-4-carboxylate: step 1/2. In Prochlorococcus marinus (strain MIT 9211), this protein is Phosphoribosylaminoimidazole-succinocarboxamide synthase.